The sequence spans 562 residues: Adenylate kinase isoenzyme 5 (562 aa).

Adenylate kinase regions lie at residues 133–316 and 377–559; these read KIIL…MAVD and KIIF…TAID. 142–147 lines the ATP pocket; it reads GSGKGT. The segment at 162–193 is NMP 1; that stretch reads SVGELLRKKIHSTSSNRKWSLIAKIITTGELA. AMP contacts are provided by residues Arg168, 191-193, 219-222, and Gln226; these read ELA and GFPR. Positions 256-266 are LID 1; it reads KRAEQQGRPDD. Arg257 is an ATP binding site. AMP is bound by residues Arg263 and Arg274. 386–391 is an ATP binding site; the sequence is GSGKGT. Positions 406–435 are NMP 2; sequence STGELLREELASESERSKLIRDIMERGDLV. Residues Thr407, Arg412, 433–435, 462–465, and Gln469 contribute to the AMP site; these read DLV and GYPR. Residues 499 to 509 form an LID 2 region; sequence QRSRSSLPVDD. ATP is bound at residue Arg500. Arg517 serves as a coordination point for AMP. Gly545 provides a ligand contact to ATP.

This sequence belongs to the adenylate kinase family. As to quaternary structure, monomer. Interacts with YWHAZ. In terms of tissue distribution, brain specific.

Its subcellular location is the cytoplasm. It catalyses the reaction AMP + ATP = 2 ADP. The catalysed reaction is a 2'-deoxyribonucleoside 5'-diphosphate + ATP = a 2'-deoxyribonucleoside 5'-triphosphate + ADP. It carries out the reaction a ribonucleoside 5'-diphosphate + ATP = a ribonucleoside 5'-triphosphate + ADP. Nucleoside monophosphate (NMP) kinase that catalyzes the reversible transfer of the terminal phosphate group between nucleoside triphosphates and monophosphates. Active on AMP and dAMP with ATP as a donor. When GTP is used as phosphate donor, the enzyme phosphorylates AMP, CMP, and to a small extent dCMP. Also displays broad nucleoside diphosphate kinase activity. The protein is Adenylate kinase isoenzyme 5 (AK5) of Homo sapiens (Human).